Consider the following 192-residue polypeptide: Nucleotidase CA_C3379 (192 aa).

The protein belongs to the 5'(3')-deoxyribonucleotidase family. Mg(2+) serves as cofactor.

The enzyme catalyses sugar phosphate + H2O = sugar + phosphate.. Catalyzes the dephosphorylation of nucleotide monophosphates and of different sugar phosphates in vitro. The polypeptide is Nucleotidase CA_C3379 (Clostridium acetobutylicum (strain ATCC 824 / DSM 792 / JCM 1419 / IAM 19013 / LMG 5710 / NBRC 13948 / NRRL B-527 / VKM B-1787 / 2291 / W)).